Here is a 571-residue protein sequence, read N- to C-terminus: Cyclic di-GMP phosphodiesterase TpdA (571 aa).

Transmembrane regions (helical) follow at residues 155–175 (IAWV…YAIN), 321–341 (VYYI…FLVI), and 395–415 (TLIS…AIYA). The 228-residue stretch at 344-571 (HRSLQAFITY…HQGYFYPLHF (228 aa)) folds into the EAL domain.

It localises to the cell inner membrane. It catalyses the reaction 3',3'-c-di-GMP + H2O = 5'-phosphoguanylyl(3'-&gt;5')guanosine + H(+). Cyclic di-GMP phosphodiesterase that plays an important role in modulating the global c-di-GMP pool. Its ability to alter the c-di-GMP pool has an effect on swimming motility, swarming motility and biofilm formation, multicellular behaviors that are important for the survival and dissemination of this environmental pathogen. Exhibits a dual function, namely, c-di-GMP degradation and modulation of its own expression. This chain is Cyclic di-GMP phosphodiesterase TpdA, found in Vibrio parahaemolyticus serotype O3:K6 (strain RIMD 2210633).